A 242-amino-acid polypeptide reads, in one-letter code: Protein GrpE (242 aa).

The segment covering 1–10 (MAGENSSTET) has biased composition (polar residues). Residues 1–64 (MAGENSSTET…QSTESTSKEK (64 aa)) are disordered. Positions 11–20 (KNQEINEKTP) are enriched in basic and acidic residues. 2 stretches are compositionally biased toward polar residues: residues 21 to 32 (EVQTFETNVEFE) and 40 to 59 (DTELSADNASIDTDIQSTES).

This sequence belongs to the GrpE family. As to quaternary structure, homodimer.

The protein resides in the cytoplasm. In terms of biological role, participates actively in the response to hyperosmotic and heat shock by preventing the aggregation of stress-denatured proteins, in association with DnaK and GrpE. It is the nucleotide exchange factor for DnaK and may function as a thermosensor. Unfolded proteins bind initially to DnaJ; upon interaction with the DnaJ-bound protein, DnaK hydrolyzes its bound ATP, resulting in the formation of a stable complex. GrpE releases ADP from DnaK; ATP binding to DnaK triggers the release of the substrate protein, thus completing the reaction cycle. Several rounds of ATP-dependent interactions between DnaJ, DnaK and GrpE are required for fully efficient folding. This chain is Protein GrpE, found in Trichodesmium erythraeum (strain IMS101).